The following is a 139-amino-acid chain: Cystatin (139 aa).

A signal peptide spans 1 to 23; the sequence is MAGARGCVVLLAAALMLVGAVLG. A Secondary area of contact motif is present at residues 76–80; it reads QLVSG. Disulfide bonds link Cys94/Cys104 and Cys118/Cys138. A Phosphoserine modification is found at Ser103.

Belongs to the cystatin family.

It is found in the secreted. In terms of biological role, this protein binds tightly to and inhibits a variety of thiol proteases including ficin, papain, and cathepsins B, C, H, and L. Although isolated from egg white, it is also present in serum. The protein is Cystatin of Gallus gallus (Chicken).